The primary structure comprises 603 residues: Polypeptide N-acetylgalactosaminyltransferase 9 (603 aa).

Topologically, residues Met1–Lys6 are cytoplasmic. A helical; Signal-anchor for type II membrane protein membrane pass occupies residues Ile7–Arg29. Residues Leu30–His603 are Lumenal-facing. Cystine bridges form between Cys141–Cys372 and Cys363–Cys442. Positions Leu150–Arg261 are catalytic subdomain A. Substrate is bound by residues Asp191 and Arg222. 3 residues coordinate Mn(2+): Asp245, His247, and His377. The interval Pro318 to Arg380 is catalytic subdomain B. Residues Arg380 and Tyr385 each coordinate substrate. A glycan (N-linked (GlcNAc...) asparagine) is linked at Asn460. One can recognise a Ricin B-type lectin domain in the interval Thr464–His600. 3 disulfides stabilise this stretch: Cys477/Cys493, Cys525/Cys540, and Cys567/Cys587.

It belongs to the glycosyltransferase 2 family. GalNAc-T subfamily. It depends on Mn(2+) as a cofactor. In terms of tissue distribution, specifically expressed in brain. Not expressed in heart, placenta, lung, liver, skeletal muscle, kidney, pancreas, spleen, thymus, prostate, testis, ovary, small intestine, colon and leukocyte. In brain, it is expressed in cerebellum, frontal lobe, temporal lobe, putamen and spinal cord, weakly expressed in cerebral cortex. Not expressed in medulla and occipital pole.

The protein localises to the golgi apparatus membrane. It catalyses the reaction L-seryl-[protein] + UDP-N-acetyl-alpha-D-galactosamine = a 3-O-[N-acetyl-alpha-D-galactosaminyl]-L-seryl-[protein] + UDP + H(+). The catalysed reaction is L-threonyl-[protein] + UDP-N-acetyl-alpha-D-galactosamine = a 3-O-[N-acetyl-alpha-D-galactosaminyl]-L-threonyl-[protein] + UDP + H(+). It functions in the pathway protein modification; protein glycosylation. Catalyzes the initial reaction in O-linked oligosaccharide biosynthesis, the transfer of an N-acetyl-D-galactosamine residue to a serine or threonine residue on the protein receptor. Does not glycosylate apomucin or SDC3. The sequence is that of Polypeptide N-acetylgalactosaminyltransferase 9 (GALNT9) from Homo sapiens (Human).